Consider the following 341-residue polypeptide: Methionine import ATP-binding protein MetN (341 aa).

The region spanning isoleucine 2–valine 241 is the ABC transporter domain. Glycine 38–serine 45 contributes to the ATP binding site.

Belongs to the ABC transporter superfamily. Methionine importer (TC 3.A.1.24) family. In terms of assembly, the complex is composed of two ATP-binding proteins (MetN), two transmembrane proteins (MetI) and a solute-binding protein (MetQ).

Its subcellular location is the cell membrane. The catalysed reaction is L-methionine(out) + ATP + H2O = L-methionine(in) + ADP + phosphate + H(+). The enzyme catalyses D-methionine(out) + ATP + H2O = D-methionine(in) + ADP + phosphate + H(+). Part of the ABC transporter complex MetNIQ involved in methionine import. Responsible for energy coupling to the transport system. The sequence is that of Methionine import ATP-binding protein MetN from Staphylococcus saprophyticus subsp. saprophyticus (strain ATCC 15305 / DSM 20229 / NCIMB 8711 / NCTC 7292 / S-41).